The primary structure comprises 396 residues: Enoyl-[acyl-carrier-protein] reductase [NADH] (396 aa).

NAD(+)-binding positions include 47 to 52 (GASTGF), 73 to 74 (FE), 110 to 111 (DA), and 138 to 139 (LA). Tyrosine 224 is a substrate binding site. Tyrosine 234 (proton donor) is an active-site residue. NAD(+) is bound by residues lysine 243 and 272–274 (LVT).

The protein belongs to the TER reductase family. Monomer.

It catalyses the reaction a 2,3-saturated acyl-[ACP] + NAD(+) = a (2E)-enoyl-[ACP] + NADH + H(+). It participates in lipid metabolism; fatty acid biosynthesis. Functionally, involved in the final reduction of the elongation cycle of fatty acid synthesis (FAS II). Catalyzes the reduction of a carbon-carbon double bond in an enoyl moiety that is covalently linked to an acyl carrier protein (ACP). The sequence is that of Enoyl-[acyl-carrier-protein] reductase [NADH] from Flavobacterium johnsoniae (strain ATCC 17061 / DSM 2064 / JCM 8514 / BCRC 14874 / CCUG 350202 / NBRC 14942 / NCIMB 11054 / UW101) (Cytophaga johnsonae).